The chain runs to 221 residues: Immunoregulatory peptides (221 aa).

Residues 1–19 form the signal peptide; it reads MNYLCLVVTLVAVAGAISG. Residues 20 to 45 constitute a propeptide that is removed on maturation; that stretch reads EKFSDDNTGYQSTPSLRIRTTPGRRR. The interval 21–155 is disordered; that stretch reads KFSDDNTGYQ…PRTIGPPYTR (135 aa). Positions 25–34 are enriched in polar residues; the sequence is DNTGYQSTPS. Over residues 48–69 the composition is skewed to low complexity; it reads PRTIGPPYTRRTLRTTTDYSTT. 2 stretches are compositionally biased toward polar residues: residues 70-85 and 123-133; these read VENGNLTTPAANSTEK and NGTTPAANSTE. Positions 191 to 221 are excised as a propeptide; the sequence is EISWTFGPLYTWRTTKGYGTTLETTNATSTS.

Salivary glands.

Its subcellular location is the secreted. In terms of biological role, suppress host inflammatory response. Exerts significant anti-inflammatory functions, either by directly inhibiting host secretion of inflammatory factors such as tumor necrosis factor-alpha (TNF), monocyte chemotactic protein-1 (CCL2), and interferon-gamma (IFNG) or by indirectly increasing the secretion of immunosuppressant cytokine of interleukin-10 (IL10). Also potently scavenges free radical in vitro in a rapid manner. All tested concentrations of this peptide have little effect on the cell viability. In vivo, inhibits hind paw adjuvant-induced inflammation in mouse in a dose-dependent manner. Functionally, suppress host inflammatory response. Exerts significant anti-inflammatory functions, either by directly inhibiting host secretion of inflammatory factors such as tumor necrosis factor-alpha (TNF), monocyte chemotactic protein-1 (CCL2), and interferon-gamma (IFNG) or by indirectly increasing the secretion of immunosuppressant cytokine of interleukin-10 (IL10). Also potently scavenges free radical in vitro in a rapid manner. Low concentrations of this peptide have little effect on the cell viability, whereas high concentrations increase the cell viability by 10-20%. In vivo, inhibits hind paw adjuvant-induced inflammation in mouse in a dose-dependent manner. Its function is as follows. Not studied but probably similar to Hyalomin-B1. The sequence is that of Immunoregulatory peptides from Hyalomma asiaticum asiaticum (Tick).